A 551-amino-acid polypeptide reads, in one-letter code: Preprotein translocase subunit SCY1, chloroplastic (551 aa).

The N-terminal 67 residues, 1-67 (MITVSEVSSY…WNLGLVINSR (67 aa)), are a transit peptide targeting the chloroplast. The next 10 membrane-spanning stretches (helical) occupy residues 142–162 (FLKLLGFLALSRLGIYIPLGG), 192–212 (LGICSLGIVPFINAQIVFQLL), 241–261 (ASVGFAIVQAIGQVFYLRPYV), 268–288 (WVVSSVTLLTLGSVLTTYIGE), 295–315 (LGNGTSLLIFTSIISYLPASF), 328–348 (YTGLGTIVVSFLLLVLGIVYV), 382–402 (SAGVMPIIFSTSSLALPATLA), 415–435 (FALTPGGSFYLPTNILLIAFF), 482–502 (VLGSAFLAVLAAGPAVVEQIT), and 503–523 (HLTAFRGFAGTSVLILVGCAT).

It belongs to the SecY/SEC61-alpha family. Part of the Sec protein translocation apparatus. Interacts with SECE1, ALB3 and probably with SECA1.

Its subcellular location is the plastid. It is found in the chloroplast thylakoid membrane. Functionally, involved in protein export. Probably interacts with other proteins to allow the translocation of proteins across the chloroplast thylakoid membranes. Required for normal greening during embryogenesis. Central subunit of the protein translocation channel SecYE. Consists of two halves formed by TMs 1-5 and 6-10. These two domains form a lateral gate at the front which open onto the bilayer between TMs 2 and 7, and are clamped together by SecE at the back. The channel is closed by both a pore ring composed of hydrophobic SecY resides and a short helix (helix 2A) on the extracellular side of the membrane which forms a plug. This Arabidopsis thaliana (Mouse-ear cress) protein is Preprotein translocase subunit SCY1, chloroplastic (SCY1).